The chain runs to 354 residues: Elongation factor Ts (354 aa).

Residues 81 to 84 (TDFV) are involved in Mg(2+) ion dislocation from EF-Tu.

It belongs to the EF-Ts family.

Its subcellular location is the cytoplasm. In terms of biological role, associates with the EF-Tu.GDP complex and induces the exchange of GDP to GTP. It remains bound to the aminoacyl-tRNA.EF-Tu.GTP complex up to the GTP hydrolysis stage on the ribosome. This Campylobacter fetus subsp. fetus (strain 82-40) protein is Elongation factor Ts.